The following is a 443-amino-acid chain: MQVSVETLEGLERKVTVSVPTEKVEEEVSSRLRNLARKVKIDGFRPGKVPFNVVKSRFSDSVREEVAREMVQSTLYEALQKNELVPAGYPHVEPLEIEPGKDFKYTAVFEVMPVFEIVELNQAPVELIRSEVTDKDVDNMIEKLREQNKEWHEVTHAVKKGDKVVIDFQGFLDDKPFQGGSAEGYELVIGSGSMIPGFEDGIVGGKIDKPFDIKVSFPEDYGHKDLAGKEATFKITIKKIMEGKLPALDEAFAEKFNIKEGGIESLKKDIRENMARELERRVNMMNREKLFDSLMSVNHVELPIALIDKEIEHLKHDMYHRLFGHEHKDDEKIPDFPRELFEEQAKRRVHLGLLFAEYVKKHEIVADNDKVNAMIDKFASAYESPDELRAWYQSSKEHMAEVEALVMEDMVADKIAEDAKLKYKNMDYDSVMNPKKGTEKKGE.

The region spanning 161–246 (GDKVVIDFQG…IKKIMEGKLP (86 aa)) is the PPIase FKBP-type domain.

It belongs to the FKBP-type PPIase family. Tig subfamily.

The protein resides in the cytoplasm. The enzyme catalyses [protein]-peptidylproline (omega=180) = [protein]-peptidylproline (omega=0). Functionally, involved in protein export. Acts as a chaperone by maintaining the newly synthesized protein in an open conformation. Functions as a peptidyl-prolyl cis-trans isomerase. In Legionella pneumophila subsp. pneumophila (strain Philadelphia 1 / ATCC 33152 / DSM 7513), this protein is Trigger factor.